The following is a 476-amino-acid chain: RNA-binding protein 45 (476 aa).

Residues methionine 1–arginine 14 show a composition bias toward gly residues. Positions methionine 1–leucine 20 are disordered. 2 RRM domains span residues serine 26–serine 106 and threonine 121–proline 192. A Glycyl lysine isopeptide (Lys-Gly) (interchain with G-Cter in SUMO2) cross-link involves residue lysine 34. Residues proline 192–alanine 212 form a disordered region. Residues valine 196–arginine 209 show a composition bias toward polar residues. Residues serine 199 and serine 464 each carry the phosphoserine modification. Positions glutamate 392–serine 464 constitute an RRM 3 domain.

The protein localises to the cytoplasm. It is found in the nucleus. Its function is as follows. RNA-binding protein with binding specificity for poly(C). May play an important role in neural development. The protein is RNA-binding protein 45 (Rbm45) of Mus musculus (Mouse).